A 111-amino-acid chain; its full sequence is Rubredoxin (111 aa).

A Rubredoxin-like domain is found at 11–62 (LDRFECRSCGYVYEPEKGDNKHDIAPETPFAELPINWRCPVCTAKKAAFTNI). Positions 16, 19, 49, and 52 each coordinate Fe cation.

Belongs to the rubredoxin family. Fe(3+) serves as cofactor.

In terms of biological role, rubredoxin is a small nonheme, iron protein lacking acid-labile sulfide. Its single Fe, chelated to 4 Cys, functions as an electron acceptor and may also stabilize the conformation of the molecule. Could be involved in hydrogenase-linked redox processes. In Nostoc sp. (strain PCC 7120 / SAG 25.82 / UTEX 2576), this protein is Rubredoxin (rub).